We begin with the raw amino-acid sequence, 31 residues long: Photosystem II reaction center protein Psb30 (31 aa).

The chain crosses the membrane as a helical span at residues 5–25 (IQLTSLLLIVIAGPLVIALLF).

It belongs to the Psb30/Ycf12 family. In terms of assembly, PSII is composed of 1 copy each of membrane proteins PsbA, PsbB, PsbC, PsbD, PsbE, PsbF, PsbH, PsbI, PsbJ, PsbK, PsbL, PsbM, PsbT, PsbX, PsbY, PsbZ, Psb30/Ycf12, peripheral proteins of the oxygen-evolving complex and a large number of cofactors. It forms dimeric complexes.

The protein resides in the plastid. Its subcellular location is the chloroplast thylakoid membrane. Its function is as follows. A core subunit of photosystem II (PSII), probably helps stabilize the reaction center. This chain is Photosystem II reaction center protein Psb30, found in Phacus acuminatus.